We begin with the raw amino-acid sequence, 248 residues long: Biosynthetic peptidoglycan transglycosylase (248 aa).

A helical transmembrane segment spans residues 20 to 42 (WLRWLMAAPLLFAAASVLQVLIL).

Belongs to the glycosyltransferase 51 family.

The protein resides in the cell inner membrane. The enzyme catalyses [GlcNAc-(1-&gt;4)-Mur2Ac(oyl-L-Ala-gamma-D-Glu-L-Lys-D-Ala-D-Ala)](n)-di-trans,octa-cis-undecaprenyl diphosphate + beta-D-GlcNAc-(1-&gt;4)-Mur2Ac(oyl-L-Ala-gamma-D-Glu-L-Lys-D-Ala-D-Ala)-di-trans,octa-cis-undecaprenyl diphosphate = [GlcNAc-(1-&gt;4)-Mur2Ac(oyl-L-Ala-gamma-D-Glu-L-Lys-D-Ala-D-Ala)](n+1)-di-trans,octa-cis-undecaprenyl diphosphate + di-trans,octa-cis-undecaprenyl diphosphate + H(+). The protein operates within cell wall biogenesis; peptidoglycan biosynthesis. Peptidoglycan polymerase that catalyzes glycan chain elongation from lipid-linked precursors. The protein is Biosynthetic peptidoglycan transglycosylase of Xanthomonas euvesicatoria pv. vesicatoria (strain 85-10) (Xanthomonas campestris pv. vesicatoria).